A 674-amino-acid chain; its full sequence is L-type lectin-domain containing receptor kinase SIT1 (674 aa).

The N-terminal stretch at 1 to 27 (MRRPELIMRSLPLILFLSLGSFHLAAA) is a signal peptide. Residues 28 to 301 (AVDDQFTFDG…IARAPSNVLK (274 aa)) lie on the Extracellular side of the membrane. A legume-lectin like region spans residues 31–275 (DQFTFDGFAG…VLAWSFKMDG (245 aa)). N42, N61, N143, N196, N219, N240, and N281 each carry an N-linked (GlcNAc...) asparagine glycan. Residues 302–322 (ILLPIASAALVSALAIAVLVI) traverse the membrane as a helical segment. The Cytoplasmic portion of the chain corresponds to 323 to 674 (HRRRRRYAEL…GNISDIPRAR (352 aa)). Residues 357-636 (FSDERLLGFG…LDGAMPLPEL (280 aa)) enclose the Protein kinase domain. Residues 363–371 (LGFGGFGRV) and K386 each bind ATP. Catalysis depends on D482, which acts as the Proton acceptor. Residues T511, T515, T516, and T521 each carry the phosphothreonine modification.

It in the C-terminal section; belongs to the protein kinase superfamily. Ser/Thr protein kinase family. The protein in the N-terminal section; belongs to the leguminous lectin family. In terms of assembly, interacts with B'KAPPA. In terms of processing, autophosphorylated at Thr-511, Thr-515 or Thr-516, and Thr-521 in response to salt stress. Dephosphorylated by phosphatase 2A in response to salt stress. Expressed in root epidermal cells.

The protein localises to the cell membrane. It carries out the reaction L-seryl-[protein] + ATP = O-phospho-L-seryl-[protein] + ADP + H(+). It catalyses the reaction L-threonyl-[protein] + ATP = O-phospho-L-threonyl-[protein] + ADP + H(+). With respect to regulation, activated by autophosphorylation in response to salt stress. Lectin-domain containing receptor kinase involved in salt stress response. Acts as a negative regulator of salt tolerance. Mediates salt sensitivity by phosphorylating and activating MPK3 and MPK6. Promotes ethylene production and mediates salt-induced ethylene signaling. Promotes the accumulation of reactive oxygen species (ROS) under salt stress conditions. Its kinase activity is triggered by salt stress and is required for its function in salt stress response. Phosphorylates B'KAPPA, a B regulatory subunit of phosphatase 2A (PP2A). The protein is L-type lectin-domain containing receptor kinase SIT1 of Oryza sativa subsp. japonica (Rice).